The chain runs to 397 residues: S-adenosylmethionine synthase (397 aa).

ATP is bound at residue histidine 16. Aspartate 18 contacts Mg(2+). A K(+)-binding site is contributed by glutamate 44. L-methionine-binding residues include glutamate 57 and glutamine 100. The interval 100–110 (QSPDIAQGVDN) is flexible loop. ATP-binding positions include 175–177 (DGK), 242–243 (RF), aspartate 251, 257–258 (RK), alanine 274, and lysine 278. Residue aspartate 251 participates in L-methionine binding. L-methionine is bound at residue lysine 282.

The protein belongs to the AdoMet synthase family. In terms of assembly, homotetramer; dimer of dimers. It depends on Mg(2+) as a cofactor. K(+) is required as a cofactor.

The protein localises to the cytoplasm. It carries out the reaction L-methionine + ATP + H2O = S-adenosyl-L-methionine + phosphate + diphosphate. Its pathway is amino-acid biosynthesis; S-adenosyl-L-methionine biosynthesis; S-adenosyl-L-methionine from L-methionine: step 1/1. Its function is as follows. Catalyzes the formation of S-adenosylmethionine (AdoMet) from methionine and ATP. The overall synthetic reaction is composed of two sequential steps, AdoMet formation and the subsequent tripolyphosphate hydrolysis which occurs prior to release of AdoMet from the enzyme. In Leifsonia xyli subsp. xyli (strain CTCB07), this protein is S-adenosylmethionine synthase.